A 906-amino-acid chain; its full sequence is Cadherin-2A (906 aa).

The signal sequence occupies residues M1–A28. Positions L29–R160 are excised as a propeptide. 5 Cadherin domains span residues D161 to F268, L269 to F383, T384 to F498, T499 to P604, and Y605 to P714. At D161–A724 the chain is on the extracellular side. Positions 171, 227, 229, 260, 261, 262, 263, and 264 each coordinate Ca(2+). The N-linked (GlcNAc...) asparagine glycan is linked to N274. D294, D296, and N302 together coordinate Ca(2+). N326 carries an N-linked (GlcNAc...) asparagine glycan. Position 354 (D354) interacts with Ca(2+). 5 N-linked (GlcNAc...) asparagine glycosylation sites follow: N403, N573, N623, N652, and N693. Residues I725 to M746 traverse the membrane as a helical segment. The Cytoplasmic portion of the chain corresponds to K747–D906. 2 disordered regions span residues E775 to T800 and S863 to Y884. The segment covering E776–Y785 has biased composition (acidic residues). A compositionally biased stretch (low complexity) spans S863–G880.

Homodimer (via extracellular region). Can also form heterodimers with other cadherins (via extracellular region). Dimerization occurs in trans, i.e. with a cadherin chain from another cell.

The protein localises to the cell membrane. The protein resides in the sarcolemma. It is found in the cell junction. It localises to the cell surface. Its subcellular location is the desmosome. The protein localises to the adherens junction. Calcium-dependent cell adhesion protein; preferentially mediates homotypic cell-cell adhesion. Cadherins may thus contribute to the sorting of heterogeneous cell types, and thereby play an important role during embryonic development. Required for proper neurite branching. Required for pre- and postsynaptic organization. This is Cadherin-2A (cdh2-a) from Xenopus laevis (African clawed frog).